The following is a 287-amino-acid chain: L-cysteine S-thiosulfotransferase subunit SoxA (287 aa).

The first 26 residues, 1–26, serve as a signal peptide directing secretion; it reads MKTMTGRLVAAALVCGGAFSGAAVSA. The Cytochrome c domain maps to 74–168; sequence DDFENSGMVF…AMVALIASVS (95 aa). 7 residues coordinate heme c: Cys102, Cys105, His106, Cys140, Cys203, Cys206, and His207. Arg244 lines the substrate pocket. Cys248 provides a ligand contact to heme c. The Cysteine persulfide intermediate role is filled by Cys248.

The protein belongs to the SoxA family. As to quaternary structure, heterodimer of SoxA and SoxX. It depends on heme c as a cofactor. Post-translationally, cysteine persulfide at Cys-248.

It is found in the periplasm. It carries out the reaction L-cysteinyl-[SoxY protein] + thiosulfate + 2 Fe(III)-[cytochrome c] = S-sulfosulfanyl-L-cysteinyl-[SoxY protein] + 2 Fe(II)-[cytochrome c] + 2 H(+). It catalyses the reaction S-sulfanyl-L-cysteinyl-[SoxY protein] + thiosulfate + 2 Fe(III)-[cytochrome c] = S-(2-sulfodisulfanyl)-L-cysteinyl-[SoxY protein] + 2 Fe(II)-[cytochrome c] + 2 H(+). Its function is as follows. C-type diheme cytochrome, which is part of the SoxAX cytochrome complex involved in sulfur oxidation. The SoxAX complex catalyzes the formation of a heterodisulfide bond between the conserved cysteine residue on a sulfur carrier SoxYZ complex subunit SoxY and thiosulfate or other inorganic sulfur substrates. This leads to the liberation of two electrons, which may be transferred from the SoxAX complex to another cytochrome c and which then may be used for reductive CO(2) fixation. The sequence is that of L-cysteine S-thiosulfotransferase subunit SoxA from Rhodovulum sulfidophilum (Rhodobacter sulfidophilus).